A 643-amino-acid chain; its full sequence is Threonine--tRNA ligase (643 aa).

The region spanning 1–61 is the TGS domain; sequence MPIITLPDGS…EQDATLEIIT (61 aa). A catalytic region spans residues 243 to 534; the sequence is DHRKIGKALD…ITEEYAGFFP (292 aa). Zn(2+)-binding residues include C334, H385, and H511.

Belongs to the class-II aminoacyl-tRNA synthetase family. Homodimer. Zn(2+) serves as cofactor.

The protein resides in the cytoplasm. It carries out the reaction tRNA(Thr) + L-threonine + ATP = L-threonyl-tRNA(Thr) + AMP + diphosphate + H(+). In terms of biological role, catalyzes the attachment of threonine to tRNA(Thr) in a two-step reaction: L-threonine is first activated by ATP to form Thr-AMP and then transferred to the acceptor end of tRNA(Thr). Also edits incorrectly charged L-seryl-tRNA(Thr). This is Threonine--tRNA ligase from Haemophilus influenzae (strain PittEE).